A 330-amino-acid polypeptide reads, in one-letter code: Protein qutG (330 aa).

Mg(2+) is bound by residues E78, D100, L102, D103, and D251. Substrate is bound at residue E78. Substrate is bound by residues 102 to 105 and D251; that span reads LDGT.

The protein belongs to the inositol monophosphatase superfamily.

Its function is as follows. Not known. Probably involved in quinate metabolism. In Emericella nidulans (strain FGSC A4 / ATCC 38163 / CBS 112.46 / NRRL 194 / M139) (Aspergillus nidulans), this protein is Protein qutG (qutG).